Here is a 529-residue protein sequence, read N- to C-terminus: E3 ubiquitin-protein ligase arih1 (529 aa).

Disordered stretches follow at residues 1 to 30 (MDSD…EDDL) and 49 to 68 (GICG…GEEE). Over residues 51-64 (CGEGGGSALGPGPG) the composition is skewed to gly residues. A UBA-like region spans residues 77-125 (TAEQILQHMVECIREVNEVIQNPATITRILLSHFNWDKEKLMERYFDGN). Residues 154 to 365 (QDMPCQICYL…SAWYNCNRYN (212 aa)) form a TRIAD supradomain region. 18 residues coordinate Zn(2+): Cys158, Cys161, Cys175, His177, Cys180, Cys183, Cys203, Cys208, Cys248, Cys253, Cys269, Cys271, Cys276, Cys279, His284, Cys289, Cys316, and Cys319. The RING-type 1 zinc finger occupies 158–208 (CQICYLNYPNSYFTGLECGHKFCMQCWSEYLTTKIIEEGMGQTISCPAHGC). The segment at 228-289 (LKYQHLITNS…GENWHDPVKC (62 aa)) adopts an IBR-type zinc-finger fold. The RING-type 2; atypical zinc-finger motif lies at 316-347 (CPKCHVTIEKDGGCNHMVCRNQNCKAEFCWVC). Residue Cys329 is part of the active site. Zn(2+)-binding residues include Cys334, Cys339, Cys344, Cys347, His354, and Cys361. The segment at 380-529 (RAALQRYLFY…EKDLWEYIED (150 aa)) is ariadne domain.

Belongs to the RBR family. Ariadne subfamily. Interacts (via the first RING-type zinc finger) with ube2l3. Associates with cullin-RING ubiquitin ligase (CRL) complexes containing neddylated cullin.

It localises to the cytoplasm. The protein localises to the nucleus. It catalyses the reaction [E2 ubiquitin-conjugating enzyme]-S-ubiquitinyl-L-cysteine + [acceptor protein]-L-lysine = [E2 ubiquitin-conjugating enzyme]-L-cysteine + [acceptor protein]-N(6)-ubiquitinyl-L-lysine.. It functions in the pathway protein modification; protein ubiquitination. Its activity is regulated as follows. Autoinhibited by the ariadne domain, which masks the second RING-type zinc finger that contains the active site and inhibits the E3 activity. Inhibition is relieved upon binding to neddylated cullin-RING ubiquitin ligase complexes, which activate the E3 ligase activity of ARIH1. In terms of biological role, E3 ubiquitin-protein ligase, which catalyzes ubiquitination of target proteins together with ubiquitin-conjugating enzyme E2 ube2l3. Acts as an atypical E3 ubiquitin-protein ligase by working together with cullin-RING ubiquitin ligase (CRL) complexes and initiating ubiquitination of CRL substrates: associates with CRL complexes and specifically mediates addition of the first ubiquitin on CRLs targets. The initial ubiquitin is then elongated. E3 ubiquitin-protein ligase activity is activated upon binding to neddylated cullin-RING ubiquitin ligase complexes. This is E3 ubiquitin-protein ligase arih1 (arih1) from Xenopus tropicalis (Western clawed frog).